Here is a 508-residue protein sequence, read N- to C-terminus: Phenylalanine--tRNA ligase alpha subunit (508 aa).

N-acetylalanine is present on Ala2. Phosphoserine is present on residues Ser193 and Ser301. The residue at position 311 (Lys311) is an N6-acetyllysine. L-phenylalanine is bound by residues Thr329, Gln372–Glu374, and Tyr412. Glu414 lines the Mg(2+) pocket. Phe438 serves as a coordination point for L-phenylalanine.

Belongs to the class-II aminoacyl-tRNA synthetase family. Phe-tRNA synthetase alpha subunit type 2 subfamily. Heterotetramer; dimer of two heterodimers formed by FARSA and FARSB. Mg(2+) is required as a cofactor.

It is found in the cytoplasm. It catalyses the reaction tRNA(Phe) + L-phenylalanine + ATP = L-phenylalanyl-tRNA(Phe) + AMP + diphosphate + H(+). The polypeptide is Phenylalanine--tRNA ligase alpha subunit (Farsa) (Mus musculus (Mouse)).